Consider the following 239-residue polypeptide: Orotidine 5'-phosphate decarboxylase (239 aa).

Substrate-binding positions include D15, K36, 63 to 72, T127, R189, Q198, G218, and R219; that span reads DLKFHDIPNT. Catalysis depends on K65, which acts as the Proton donor.

This sequence belongs to the OMP decarboxylase family. Type 1 subfamily. In terms of assembly, homodimer.

It catalyses the reaction orotidine 5'-phosphate + H(+) = UMP + CO2. It participates in pyrimidine metabolism; UMP biosynthesis via de novo pathway; UMP from orotate: step 2/2. Its function is as follows. Catalyzes the decarboxylation of orotidine 5'-monophosphate (OMP) to uridine 5'-monophosphate (UMP). This chain is Orotidine 5'-phosphate decarboxylase, found in Prochlorococcus marinus subsp. pastoris (strain CCMP1986 / NIES-2087 / MED4).